Consider the following 156-residue polypeptide: Large ribosomal subunit protein uL15 (156 aa).

The disordered stretch occupies residues 25–49; it reads RGIGCGKGKTSGRGHKGQKARSGTS. Over residues 34–43 the composition is skewed to basic residues; sequence TSGRGHKGQK.

The protein belongs to the universal ribosomal protein uL15 family. As to quaternary structure, part of the 50S ribosomal subunit.

Binds to the 23S rRNA. In Wolbachia sp. subsp. Brugia malayi (strain TRS), this protein is Large ribosomal subunit protein uL15.